Here is a 317-residue protein sequence, read N- to C-terminus: Methyltransferase CPUR_05424 (317 aa).

The tract at residues 57 to 149 (DVGAGNGPYA…QLRPGGTFAC (93 aa)) is methyltransferase domain.

This sequence belongs to the methyltransferase superfamily.

The protein operates within pigment biosynthesis. Methyltransferase; part of the ergochrome gene cluster responsible for the typical purple-black color of the ergot sclerotia. The ergochrome gene cluster produces several ergot pigments including the yellow ergochrome secalonic acid and its derivatives, as well as the red anthraquinones endocrocin and clavorubin. The pathway begins with the synthesis of atrochrysone thioester by the polyketide synthase (PKS) CPUR_05437. The atrochrysone carboxyl ACP thioesterase CPUR_05436 then breaks the thioester bond and releases the atrochrysone carboxylic acid from CPUR_05437. The atrochrysone carboxylic acid is then converted to atrochrysone which is further transformed into emodin anthrone. The next step is performed by the anthrone oxygenase CPUR_05434 that catalyzes the oxidation of emodinanthrone to emodin. Emodin is further modified to yield monodictyphenone via several steps involving CPUR_05427, CPUR_05428, CPUR_05429 and CPUR_05430. The short chain dehydrogenase/reductase CPUR_05418 then catalyzes the C-5 ketoreduction to give the xanthone skeleton of the monomeric units. Ergochromes formation requires further dimerization steps of different xanthone units, probably catalyzed by the cytochrome P450 monooxygenase CPUR_05419. CPUR_05425, CPUR_05426 and CPUR_05431 are unique to Claviceps, thus it is likely that they are involved in further modification of xanthone units or in their dimerization. The yellow ergochromes and the red anthraquinone pigments endocrocin and clavorubin are products from the same PKS derived precursors and the latter are likely shunt products in the pathway of xanthone biosynthesis. It is proposed that atrochrysone carboxylic acid released from the PKS CPUR_05437 can also be converted to endocrocin anthrone which is further oxidized into endocrocin by CPUR_05435. Endocrocin could be then modified to clavorubin, possibly by CPUR_05423 and CPUR_05431. Clavorubin is the principal anthraquinone metabolite produced by the cluster with a much higher yield compared to endocrocin. This Claviceps purpurea (strain 20.1) (Ergot fungus) protein is Methyltransferase CPUR_05424.